The chain runs to 201 residues: L(+)-tartrate dehydratase subunit beta (201 aa).

His37 is an active-site residue.

Belongs to the class-I fumarase family. Heterotetramer of two alpha and two beta subunits.

The enzyme catalyses (2R,3R)-tartrate = oxaloacetate + H2O. This is L(+)-tartrate dehydratase subunit beta (ttdB) from Escherichia coli O6:K15:H31 (strain 536 / UPEC).